The chain runs to 679 residues: Glycine--tRNA ligase beta subunit (679 aa).

The protein belongs to the class-II aminoacyl-tRNA synthetase family. As to quaternary structure, tetramer of two alpha and two beta subunits.

It is found in the cytoplasm. It catalyses the reaction tRNA(Gly) + glycine + ATP = glycyl-tRNA(Gly) + AMP + diphosphate. The protein is Glycine--tRNA ligase beta subunit of Streptococcus agalactiae serotype Ia (strain ATCC 27591 / A909 / CDC SS700).